Consider the following 341-residue polypeptide: GDT1-like protein 1, chloroplastic (341 aa).

Low complexity predominate over residues 1 to 13 (MASVASSTVFASS). 2 disordered regions span residues 1 to 41 (MASV…GRSV) and 54 to 76 (VVTRASDEEGPPEPAGQGRGGGR). The transit peptide at 1-57 (MASVASSTVFASSLPHHRATTRAPPTPPRIPRRARLPGRSVVSCLPKRGSEKLVVTR) directs the protein to the chloroplast. Helical transmembrane passes span 79-99 (PSLDASSCGLALAAAAGVLML), 117-137 (VVGDLGDISTGFASAFLLIFF), 158-178 (AIIFLGTFGALAVMTIISVVL), 203-223 (FLAACLLVYYGITTLLDAASG), 246-266 (GAGIISAASTIASTFVLVFIA), 286-306 (LGVIAGSLAGHAVATLIAVLG), and 318-338 (IVAYIGGSLFLAFAAVTLVEI).

The protein belongs to the GDT1 family.

The protein localises to the plastid. Its subcellular location is the chloroplast membrane. In Oryza sativa subsp. japonica (Rice), this protein is GDT1-like protein 1, chloroplastic.